We begin with the raw amino-acid sequence, 520 residues long: Erythritol kinase (520 aa).

This sequence belongs to the FGGY kinase family.

The enzyme catalyses erythritol + ATP = D-erythritol 1-phosphate + ADP + H(+). The protein operates within carbohydrate metabolism; erythritol degradation. Its function is as follows. Catalyzes the phosphorylation of erythritol to D-erythritol-1-phosphate. The sequence is that of Erythritol kinase from Brucella abortus (strain 2308).